A 753-amino-acid chain; its full sequence is Dolichyl-phosphate-mannose--protein mannosyltransferase 3 (753 aa).

Residues 1–50 (MPYRVATGYSEKSTDDDLIWRTPIVKEELEDADNFLKDDAELYDKVKNES) are Cytoplasmic-facing. A helical membrane pass occupies residues 51-71 (AVSHLDTIVMPIIFTVLGMFT). Topologically, residues 72 to 148 (RMYKIGRNNH…IDYVKMRLFQ (77 aa)) are lumenal. Asn124 is a glycosylation site (N-linked (GlcNAc...) asparagine). The helical transmembrane segment at 149 to 169 (AMFSSLCVPLAYFTGRAIGFS) threads the bilayer. The Cytoplasmic segment spans residues 170–174 (RLSVW). Residues 175-195 (LFTILVIFENSYATLGKFILL) form a helical membrane-spanning segment. At 196–235 (DSMLLFFTVSSYFCLAKFHTMRKSPFSARWWLWLCLTGLN) the chain is on the lumenal side. Residues 236 to 256 (LGCAISVKMVGLFIISVVGIY) form a helical membrane-spanning segment. The Cytoplasmic segment spans residues 257–282 (TISELWNLLSDRSVSWKVYVNHWLAR). The helical transmembrane segment at 283–303 (IFGLIIIPVCVFLLCFKIHFD) threads the bilayer. Topologically, residues 304 to 602 (LLSNSGPGDS…IKYFLLGSPA (299 aa)) are lumenal. A glycan (N-linked (GlcNAc...) asparagine) is linked at Asn324. Positions 332 to 387 (PRDVALGSSIISIKNQALGGALLHSHVQPFPEGSEQQQVTVYGYSDANNEWFFQRI) constitute an MIR 1 domain. N-linked (GlcNAc...) asparagine glycosylation is present at Asn398. MIR domains lie at 401 to 457 (IEFV…IEIV) and 465 to 523 (PTLL…IETH). Residues 603–623 (SVWPSSIAVCALIIHVIFLTL) form a helical membrane-spanning segment. Residues 624 to 639 (KWQRQCVILSDPVERD) lie on the Cytoplasmic side of the membrane. Residues 640-660 (VFVMAAFYPLLAWLLHYMPFV) traverse the membrane as a helical segment. Residues 661 to 665 (VMSRV) are Lumenal-facing. A helical membrane pass occupies residues 666–686 (VYAHHYLPTLYFALMILSYYF). Residues 687-703 (DMITKRWATRNTGKFLR) are Cytoplasmic-facing. Residues 704 to 724 (LGAYIVYGSIVIAGFFYFSPF) form a helical membrane-spanning segment. The Lumenal portion of the chain corresponds to 725–753 (SFGMDGPVDDYAYLAWLPTWQIVEDIRNT).

It belongs to the glycosyltransferase 39 family. PMT3 and PMT5 form a functional heterodimer. Also forms a minor complex with PMT1.

It localises to the endoplasmic reticulum membrane. The catalysed reaction is a di-trans,poly-cis-dolichyl beta-D-mannosyl phosphate + L-seryl-[protein] = 3-O-(alpha-D-mannosyl)-L-seryl-[protein] + a di-trans,poly-cis-dolichyl phosphate + H(+). It catalyses the reaction a di-trans,poly-cis-dolichyl beta-D-mannosyl phosphate + L-threonyl-[protein] = 3-O-(alpha-D-mannosyl)-L-threonyl-[protein] + a di-trans,poly-cis-dolichyl phosphate + H(+). Its pathway is protein modification; protein glycosylation. Protein O-mannosyltransferase involved in O-glycosylation which is essential for cell wall rigidity. Forms a heterodimeric complex with PMT5 and more rarely with PMT1 to transfer mannose from Dol-P-mannose to Ser or Thr residues on proteins. Seems to have redundant activity to PMT2. This chain is Dolichyl-phosphate-mannose--protein mannosyltransferase 3, found in Saccharomyces cerevisiae (strain ATCC 204508 / S288c) (Baker's yeast).